Here is a 61-residue protein sequence, read N- to C-terminus: Small ribosomal subunit protein uS14 (61 aa).

Residues cysteine 24, cysteine 27, cysteine 40, and cysteine 43 each contribute to the Zn(2+) site.

Belongs to the universal ribosomal protein uS14 family. Zinc-binding uS14 subfamily. As to quaternary structure, part of the 30S ribosomal subunit. Contacts proteins S3 and S10. It depends on Zn(2+) as a cofactor.

Its function is as follows. Binds 16S rRNA, required for the assembly of 30S particles and may also be responsible for determining the conformation of the 16S rRNA at the A site. The chain is Small ribosomal subunit protein uS14 from Rubrobacter xylanophilus (strain DSM 9941 / JCM 11954 / NBRC 16129 / PRD-1).